The chain runs to 299 residues: uncharacterized protein (299 aa).

The segment at 1-44 is disordered; the sequence is MSDSNLTNPIKAFFHDEFPEQYQEPPGLQKNMKPVPDCGEKSYK. Position 55 to 79 (55 to 79) interacts with NADP(+); the sequence is LVTGGDSGIGRAAAIAYAREGADVA. Serine 188 contributes to the substrate binding site. Catalysis depends on tyrosine 201, which acts as the Proton acceptor.

This sequence belongs to the short-chain dehydrogenases/reductases (SDR) family.

This is an uncharacterized protein from Bacillus subtilis (strain 168).